Consider the following 259-residue polypeptide: Chaplin-C (259 aa).

Positions 1–28 (MRQATRKGLMTMAAATGVIAAAGGAAHA) are cleaved as a signal peptide. The 41-residue stretch at 39–79 (SPGVLSGNTVQAPVHVPVNVCGNTVDVVGVLNPAMGNACAN) folds into the Chaplin 1 domain. The span at 84–112 (ASGGHGGHGGHGGYGDSGGEGGSHGGSHA) shows a compositional bias: gly residues. Disordered regions lie at residues 84–129 (ASGG…NHVE) and 154–227 (GNDC…ALAE). The region spanning 119–159 (SPGVGSGNHVEVPIDVPVNVCGNSIDVVGALNPTTGNDCGN) is the Chaplin 2 domain. Positions 180 to 189 (HNPGNPGNPD) are enriched in low complexity. Positions 225–229 (LAETG) match the LPXTG sorting signal motif. Thr228 is subject to Pentaglycyl murein peptidoglycan amidated threonine. Positions 229-259 (GSDLPLGLALPVGAGALLAGTVLYRKARASV) are cleaved as a propeptide — removed by sortase.

This sequence belongs to the chaplin family. Long chaplin subfamily.

The protein localises to the secreted. The protein resides in the cell wall. One of 8 partially redundant surface-active proteins required for efficient formation of aerial mycelium; the short chaplins assemble into a hydrophobic, amyloidal fibrillar surface layer that envelopes and protects aerial hyphae and spores, presumably anchored to the long chaplins. Chaplins have an overlapping function with the surface-active SapB peptide; chaplins are essential on minimal medium while on rich medium both chaplins and SapB are required for efficient aerial hyphae formation. A minimal chaplin strain capable of forming aerial mycelium/hyphae on minimal medium contains ChpC, ChpE and ChpH. The strain also has restored rodlet formation on the hyphae surface. The long chaplins (ChpA, ChpB, ChpC) are not absolutely necessary for short chaplin localization or rodlet formation, but probably play a role in initiating aerial hyphae development. Chaplins are also involved in cell attachment to a hydrophobic surface. The polypeptide is Chaplin-C (Streptomyces coelicolor (strain ATCC BAA-471 / A3(2) / M145)).